The primary structure comprises 363 residues: MTQVYNFCAGPAMLPVEVLRRAEQELCNWHGLGTSVMEISHRGEAFMQVAAEAEQDLRDLLKVPADYRILFCHGGARGQFAAVPLNLLGSERTARADYAVGGYWAQSAAKEAQRYCNPHAIDIAQRVDGKLSMKPMAQWDLLEESAYLHYCPNETIDGVTIDEEPDFGDRVVVADMSSTILSRPIDVSRYGLIYAGAQKNVGPAGITLVIVREDLLGRARREIPSILDYQVLVESDSMFNTPPTFAWYLSGMVFKWLKEQGGVSEMARRNQAKADLLYQAIDGGEFYRNDVAPANRSRMNVPFQMVDSALDPLFWDEARKAGLHALKGHKVAGGMRASIYNAMPLAGVQALVAFMADFARRHG.

L-glutamate is bound at residue Arg42. Pyridoxal 5'-phosphate-binding positions include Ala76–Arg77, Trp104, Thr155, Asp175, and Gln198. N6-(pyridoxal phosphate)lysine is present on Lys199. Pyridoxal 5'-phosphate is bound at residue Asn240–Thr241.

The protein belongs to the class-V pyridoxal-phosphate-dependent aminotransferase family. SerC subfamily. As to quaternary structure, homodimer. Pyridoxal 5'-phosphate is required as a cofactor.

Its subcellular location is the cytoplasm. The enzyme catalyses O-phospho-L-serine + 2-oxoglutarate = 3-phosphooxypyruvate + L-glutamate. It carries out the reaction 4-(phosphooxy)-L-threonine + 2-oxoglutarate = (R)-3-hydroxy-2-oxo-4-phosphooxybutanoate + L-glutamate. Its pathway is amino-acid biosynthesis; L-serine biosynthesis; L-serine from 3-phospho-D-glycerate: step 2/3. The protein operates within cofactor biosynthesis; pyridoxine 5'-phosphate biosynthesis; pyridoxine 5'-phosphate from D-erythrose 4-phosphate: step 3/5. Functionally, catalyzes the reversible conversion of 3-phosphohydroxypyruvate to phosphoserine and of 3-hydroxy-2-oxo-4-phosphonooxybutanoate to phosphohydroxythreonine. This Edwardsiella ictaluri (strain 93-146) protein is Phosphoserine aminotransferase (serC).